The following is a 105-amino-acid chain: uncharacterized protein (105 aa).

The chain crosses the membrane as a helical span at residues 29–49 (NAFLLILSEAYLLFVFLSYLI).

The protein localises to the membrane. This is an uncharacterized protein from Saccharomyces cerevisiae (strain ATCC 204508 / S288c) (Baker's yeast).